A 183-amino-acid polypeptide reads, in one-letter code: MSSTQDTRLIWIDLEMTGLDTDNDQIIEIATIITDDHLNIVAEGPVLAVHQPDRILNAMDEWNTRQHGQSGLIERVRRSKLTARDVELQTLEFLKKWVNPKTSPMCGNSICQDRRFMHRLMPELEQYFHYRNLDVSSVKELAKRWRPEIMSGLKKNASHLAMDDIRDSISELKYYREYFFIKN.

The Exonuclease domain maps to 9–172 (LIWIDLEMTG…DDIRDSISEL (164 aa)). The active site involves Tyr130.

Belongs to the oligoribonuclease family.

It is found in the cytoplasm. In terms of biological role, 3'-to-5' exoribonuclease specific for small oligoribonucleotides. The protein is Oligoribonuclease of Acinetobacter baylyi (strain ATCC 33305 / BD413 / ADP1).